Consider the following 224-residue polypeptide: Claudin-19 (224 aa).

Residues 1–7 lie on the Cytoplasmic side of the membrane; it reads MANSGLQ. The chain crosses the membrane as a helical span at residues 8–28; that stretch reads LLGYFLALGGWVGIIASTALP. At 29 to 81 the chain is on the extracellular side; sequence QWKQSSYAGDAIITAVGLYEGLWMSCASQSTGQVQCKLYDSLLALDGHIQSAR. Cys-54 and Cys-64 are disulfide-bonded. The chain crosses the membrane as a helical span at residues 82–102; that stretch reads ALMVVAVLLGFVAMVLSVVGM. The Cytoplasmic segment spans residues 103 to 117; that stretch reads KCTRVGDSNPIAKGR. A helical transmembrane segment spans residues 118–138; the sequence is VAIAGGALFILAGLCTLTAVS. Over 139-160 the chain is Extracellular; that stretch reads WYATLVTQEFFNPSTPVNARYE. The helical transmembrane segment at 161-181 threads the bilayer; it reads FGPALFVGWASAGLAVLGGSF. The Cytoplasmic portion of the chain corresponds to 182 to 224; sequence LCCTCPEPERPNSSPQPYRPGPSAAAREPVVKLPASAKGPLGV. The segment at 191-224 is disordered; the sequence is RPNSSPQPYRPGPSAAAREPVVKLPASAKGPLGV.

This sequence belongs to the claudin family. In terms of assembly, can form homo- and heteropolymeric tight junction strands. Interacts with other claudins including CLDN3, CLDN10, CLDN16 and CLDN18 with highest affinity for CLDN16. Interacts (via PDZ-binding motif TRV) with TJP1 (via PDZ domain).

It is found in the cell junction. It localises to the tight junction. The protein resides in the cell membrane. It catalyses the reaction Mg(2+)(in) = Mg(2+)(out). It carries out the reaction Ca(2+)(in) = Ca(2+)(out). The enzyme catalyses Na(+)(in) = Na(+)(out). The catalysed reaction is K(+)(in) = K(+)(out). It catalyses the reaction Rb(+)(in) = Rb(+)(out). It carries out the reaction Cs(+)(in) = Cs(+)(out). The enzyme catalyses Li(+)(in) = Li(+)(out). In terms of biological role, forms paracellular channels: coassembles with CLDN16 into tight junction strands with cation-selective channels through the strands, conveying epithelial permeability in a process known as paracellular tight junction permeability. Involved in the maintenance of ion gradients along the nephron. In the thick ascending limb (TAL) of Henle's loop, facilitates sodium paracellular permeability from the interstitial compartment to the lumen, contributing to the lumen-positive transepithelial potential that drives paracellular magnesium and calcium reabsorption. Forms paracellular barriers on its own. In the peripheral nervous system, represents a major constituent of the tight junctions in Schwann cells and contributes to electrical sealing. During retinal neurogenesis, may regulate the barrier properties of tight junctions in retinal pigment epithelium, required for proper retinal tissue differentiation and vision. The polypeptide is Claudin-19 (Homo sapiens (Human)).